Here is a 259-residue protein sequence, read N- to C-terminus: Deoxyribose-phosphate aldolase (259 aa).

The active-site Proton donor/acceptor is the Asp102. Catalysis depends on Lys167, which acts as the Schiff-base intermediate with acetaldehyde. Lys201 (proton donor/acceptor) is an active-site residue.

The protein belongs to the DeoC/FbaB aldolase family. DeoC type 2 subfamily.

The protein localises to the cytoplasm. It catalyses the reaction 2-deoxy-D-ribose 5-phosphate = D-glyceraldehyde 3-phosphate + acetaldehyde. It functions in the pathway carbohydrate degradation; 2-deoxy-D-ribose 1-phosphate degradation; D-glyceraldehyde 3-phosphate and acetaldehyde from 2-deoxy-alpha-D-ribose 1-phosphate: step 2/2. Catalyzes a reversible aldol reaction between acetaldehyde and D-glyceraldehyde 3-phosphate to generate 2-deoxy-D-ribose 5-phosphate. This is Deoxyribose-phosphate aldolase from Salmonella dublin (strain CT_02021853).